A 389-amino-acid polypeptide reads, in one-letter code: Transaldolase (389 aa).

Catalysis depends on Lys-136, which acts as the Schiff-base intermediate with substrate. EF-hand domains follow at residues 330–365 (ALNQ…FDAI) and 365–388 (IDLN…VSKL). Ca(2+) is bound by residues Asp-343, Asp-345, Asp-347, Glu-354, Asp-366, Asn-368, Asp-370, Lys-372, and Glu-377.

It belongs to the transaldolase family. Type 1 subfamily.

It is found in the cytoplasm. It catalyses the reaction D-sedoheptulose 7-phosphate + D-glyceraldehyde 3-phosphate = D-erythrose 4-phosphate + beta-D-fructose 6-phosphate. The protein operates within carbohydrate degradation; pentose phosphate pathway; D-glyceraldehyde 3-phosphate and beta-D-fructose 6-phosphate from D-ribose 5-phosphate and D-xylulose 5-phosphate (non-oxidative stage): step 2/3. In terms of biological role, transaldolase is important for the balance of metabolites in the pentose-phosphate pathway. The chain is Transaldolase from Gloeobacter violaceus (strain ATCC 29082 / PCC 7421).